The sequence spans 28 residues: Basic phospholipase A2 homolog BmatTX-II (28 aa).

In terms of assembly, monomer. Expressed by the venom gland.

The protein resides in the secreted. Its function is as follows. Snake venom phospholipase A2 homolog that lacks enzymatic activity. Shows high myotoxic activity, neutrophil activation (demonstrated by activation induction of IL-1beta production), and slight cytotoxicity against Jurkat (leukemia T) and SK-BR-3 (breast adenocarcinoma) tumor cell lines. A model of myotoxic mechanism has been proposed: an apo Lys49-PLA2 is activated by the entrance of a hydrophobic molecule (e.g. fatty acid) at the hydrophobic channel of the protein leading to a reorientation of a monomer. This reorientation causes a transition between 'inactive' to 'active' states, causing alignment of C-terminal and membrane-docking sites (MDoS) side-by-side and putting the membrane-disruption sites (MDiS) in the same plane, exposed to solvent and in a symmetric position for both monomers. The MDoS region stabilizes the toxin on membrane by the interaction of charged residues with phospholipid head groups. Subsequently, the MDiS region destabilizes the membrane with penetration of hydrophobic residues. This insertion causes a disorganization of the membrane, allowing an uncontrolled influx of ions (i.e. calcium and sodium), and eventually triggering irreversible intracellular alterations and cell death. This chain is Basic phospholipase A2 homolog BmatTX-II, found in Bothrops mattogrossensis (Pitviper).